A 376-amino-acid polypeptide reads, in one-letter code: Heme-dependent oxidative N-demethylase gamma subunit (376 aa).

As to quaternary structure, the heme-dependent oxidative N-demethylase (HODM) is a heterotetramer composed of a catalytic alpha subunit, a FMN/2Fe-2S-dependent oxidoreductase beta subunit, a gamma subunit with putative aminotransferase activity, and a delta subunit of unknown function.

Its function is as follows. Component of the heme-dependent oxidative N-demethylase (HODM) enzyme, that catalyzes the NADPH-dependent oxidation of dimethylamine (DMA) to methylamine (MA) and formaldehyde. Functions in bacterial methylated amine catabolism, linking alkylamine oxidation to the tetrahydrofolate C1 pool. The gamma subunit of HODM may act as an aminomethyltransferase involved in the detoxification of formaldehyde released by the alpha subunit; this process requires tetrahydrofolate (THF). In Ectopseudomonas mendocina (strain ymp) (Pseudomonas mendocina), this protein is Heme-dependent oxidative N-demethylase gamma subunit.